The primary structure comprises 40 residues: Alpha-conotoxin-like Qc1.1c (40 aa).

Residues 1–19 (SDGRNTAANDKASNLMALR) constitute a propeptide that is removed on maturation. Disulfide bonds link C22–C28 and C23–C36. The lacks the Ser-Xaa-Pro motif that is crucial for potent interaction with nAChR stretch occupies residues 24-26 (PNP).

The protein belongs to the conotoxin A superfamily. As to expression, expressed by the venom duct.

It localises to the secreted. Functionally, alpha-conotoxins act on postsynaptic membranes, they bind to the nicotinic acetylcholine receptors (nAChR) and thus inhibit them. Has possibly a distinct nAChR binding mode from other alpha-conotoxins, due to a different three residue motif (lacks the Ser-Xaa-Pro motif). The protein is Alpha-conotoxin-like Qc1.1c of Conus quercinus (Oak cone).